A 442-amino-acid chain; its full sequence is uncharacterized protein (442 aa).

The next 7 membrane-spanning stretches (helical) occupy residues 209–229 (FNIWTHLSAFIVFFAVLAYFY), 247–267 (IFFLLSAMKCLGCSVIWHTFS), 284–304 (VGISALIAASIISVEYHAFVC), 308–328 (LRFIFIAFTGTLGLIGIYTPW), 342–362 (IFFFVGLACSGLIPMITMFYI), 374–394 (PVFKSIFSYIIGVLFYGLHIP), and 402–422 (FDIIGNSHQIWHIAIIVGVAF).

The protein localises to the membrane. This is an uncharacterized protein from Schizosaccharomyces pombe (strain 972 / ATCC 24843) (Fission yeast).